The chain runs to 267 residues: Outer membrane protein assembly factor BamD (267 aa).

Residues 1-16 form the signal peptide; sequence MKKILLTVSLGLALSA. C17 carries N-palmitoyl cysteine lipidation. Residue C17 is the site of S-diacylglycerol cysteine attachment.

Belongs to the BamD family. Part of the Bam complex.

It is found in the cell outer membrane. Its function is as follows. Part of the outer membrane protein assembly complex, which is involved in assembly and insertion of beta-barrel proteins into the outer membrane. Required for efficient transformation of Neisseria meningitidis by species-related DNA. The sequence is that of Outer membrane protein assembly factor BamD from Neisseria meningitidis serogroup A / serotype 4A (strain DSM 15465 / Z2491).